A 596-amino-acid chain; its full sequence is Proton channel OTOP3 (596 aa).

Positions Met-1 to Ser-21 are enriched in low complexity. Positions Met-1–Ala-59 are disordered. Topologically, residues Met-1–Gln-88 are cytoplasmic. A phosphoserine mark is found at Ser-21 and Ser-23. The span at Ala-43–Ala-59 shows a compositional bias: basic and acidic residues. A helical membrane pass occupies residues Leu-89 to Met-109. Residues Ile-110–Gly-119 lie on the Extracellular side of the membrane. A helical membrane pass occupies residues Asp-120–Thr-143. Residues Thr-144–Pro-159 lie on the Cytoplasmic side of the membrane. The helical transmembrane segment at Leu-160–Val-181 threads the bilayer. At Gly-182–Gln-193 the chain is on the extracellular side. A helical transmembrane segment spans residues Leu-194–Cys-217. Residues Lys-218–Thr-225 are Cytoplasmic-facing. Residues Asn-226 to Thr-248 form a helical membrane-spanning segment. The Extracellular portion of the chain corresponds to Asn-249 to Pro-295. Residues Phe-296–Trp-312 traverse the membrane as a helical segment. Over Lys-313 to Ile-338 the chain is Cytoplasmic. A helical membrane pass occupies residues Phe-339–Phe-358. The Extracellular segment spans residues Gln-359–Phe-372. A helical membrane pass occupies residues Thr-373–Ala-395. The Cytoplasmic segment spans residues Ile-396–Ser-413. Residues Leu-414–Val-435 form a helical membrane-spanning segment. Residues Ala-436–Leu-446 are Extracellular-facing. Residues Asn-447–Ile-469 traverse the membrane as a helical segment. The Cytoplasmic portion of the chain corresponds to Glu-470–Glu-529. A helical membrane pass occupies residues Ile-530 to Phe-547. Over Gly-548–Ile-566 the chain is Extracellular. The chain crosses the membrane as a helical span at residues Trp-567–Leu-589. The Cytoplasmic portion of the chain corresponds to Val-590–Ala-596.

Belongs to the otopetrin family. In terms of assembly, homodimer.

It is found in the cell membrane. The catalysed reaction is H(+)(in) = H(+)(out). Activated by extracellular acidification. Activated by Zn(2+) under non-acidic conditions. In terms of biological role, proton-selective channel gated by extracellular protons. The polypeptide is Proton channel OTOP3 (Homo sapiens (Human)).